The chain runs to 499 residues: MSILYEERLDGALPDVDRTSVLMALREHVPGLEILHTDEEIIPYECDGLSAYRTRPLLVVLPKQMEQVTAILAVCHRLRVPVVTRGAGTGLSGGALPLEKGVLLVMARFKEILDINPVGRRARVQPGVRNLAISQAVAPHNLYYAPDPSSQIACSIGGNVAENAGGVHCLKYGLTVHNLLKIEVQTLDGEALTLGSDALDSPGFDLLALFTGSEGMLGVTTEVTVKLLPKPPVARVLLASFDSVEKAGLAVGDIIANGIIPGGLEMMDNLSIRAAEDFIHAGYPVDAEAILLCELDGVESDVQEDCERVNDILLKAGATDVRLAQDEAERVRFWAGRKNAFPAVGRISPDYYCMDGTIPRRALPGVLEGIARLSQQYDLRVANVFHAGDGNMHPLILFDANEPGEFARAEELGGKILELCVEVGGSISGEHGIGREKINQMCAQFNSDEITTFHAVKAAFDPDGLLNPGKNIPTLHRCAEFGAMHVHHGHLPFPELERF.

The FAD-binding PCMH-type domain occupies 52 to 230; it reads YRTRPLLVVL…TEVTVKLLPK (179 aa).

Belongs to the FAD-binding oxidoreductase/transferase type 4 family. In terms of assembly, the glycolate oxidase likely consists of three subunits, GlcD, GlcE and GlcF. FAD is required as a cofactor.

It localises to the cell inner membrane. The catalysed reaction is glycolate + A = glyoxylate + AH2. It catalyses the reaction (R)-lactate + A = pyruvate + AH2. Its function is as follows. Component of a complex that catalyzes the oxidation of glycolate to glyoxylate. Is required for E.coli to grow on glycolate as a sole source of carbon. Is also able to oxidize D-lactate ((R)-lactate) with a similar rate. Does not link directly to O(2), and 2,6-dichloroindophenol (DCIP) and phenazine methosulfate (PMS) can act as artificial electron acceptors in vitro, but the physiological molecule that functions as a primary electron acceptor during glycolate oxidation is unknown. This Escherichia coli O6:H1 (strain CFT073 / ATCC 700928 / UPEC) protein is Glycolate oxidase subunit GlcD (glcD).